A 176-amino-acid polypeptide reads, in one-letter code: Negative modulator of initiation of replication (176 aa).

Belongs to the SeqA family. As to quaternary structure, homodimer. Polymerizes to form helical filaments.

Its subcellular location is the cytoplasm. Negative regulator of replication initiation, which contributes to regulation of DNA replication and ensures that replication initiation occurs exactly once per chromosome per cell cycle. Binds to pairs of hemimethylated GATC sequences in the oriC region, thus preventing assembly of replication proteins and re-initiation at newly replicated origins. Repression is relieved when the region becomes fully methylated. The polypeptide is Negative modulator of initiation of replication (Hamiltonella defensa subsp. Acyrthosiphon pisum (strain 5AT)).